Consider the following 267-residue polypeptide: GTP cyclohydrolase FolE2 2 (267 aa).

It belongs to the GTP cyclohydrolase IV family.

It catalyses the reaction GTP + H2O = 7,8-dihydroneopterin 3'-triphosphate + formate + H(+). Its pathway is cofactor biosynthesis; 7,8-dihydroneopterin triphosphate biosynthesis; 7,8-dihydroneopterin triphosphate from GTP: step 1/1. In terms of biological role, converts GTP to 7,8-dihydroneopterin triphosphate. The chain is GTP cyclohydrolase FolE2 2 from Cupriavidus metallidurans (strain ATCC 43123 / DSM 2839 / NBRC 102507 / CH34) (Ralstonia metallidurans).